Reading from the N-terminus, the 380-residue chain is Putative F-box/kelch-repeat protein At2g44030 (380 aa).

The 51-residue stretch at 16-66 folds into the F-box domain; the sequence is PKSFLSLPYDVVFNCLSRVSRTHDPILSLVSKSFRSLLALPDLEAERFRIL. Kelch repeat units follow at residues 123-170 and 172-219; these read EIYL…VIDG and INVY…ALIK.

This is Putative F-box/kelch-repeat protein At2g44030 from Arabidopsis thaliana (Mouse-ear cress).